The primary structure comprises 791 residues: Major facilitator superfamily domain-containing protein 6 (791 aa).

Ala2 bears the N-acetylalanine mark. Phosphothreonine is present on Thr10. The disordered stretch occupies residues 22-47; it reads LADPFNGISREPEPPSNETPSSTETS. Residues 37 to 47 show a composition bias toward low complexity; sequence SNETPSSTETS. A run of 6 helical transmembrane segments spans residues 73–93, 105–125, 132–152, 286–306, 335–355, and 369–389; these read VFYF…PVYY, LLVG…GVVA, KIVL…IGFV, AIFL…ASSV, WGLA…EVLI, and QIVF…ATQF. A disordered region spans residues 407-427; sequence EIPQVERNNSTESSEETPTTT. Low complexity predominate over residues 416 to 427; that stretch reads STESSEETPTTT. The next 6 helical transmembrane spans lie at 450–470, 479–499, 507–527, 544–564, 579–599, and 605–625; these read VLFV…FLYW, TTLF…AYFF, IGHI…YIYI, GVTH…AVPP, LGLG…YFGA, and GIGM…WLAV. 2 disordered regions span residues 662-687 and 723-791; these read MPRI…NKPA and LQGT…AGGH. Residues 750–768 are compositionally biased toward polar residues; it reads SRNQPSPDAAASQTQTSPA. Low complexity predominate over residues 782 to 791; that stretch reads QQAQLAAGGH.

This sequence belongs to the major facilitator superfamily. MFSD6 family. May interact with HLA-B62. Widely expressed. Expression levels in peripheral blood mononuclear cells are highly variable between individuals, including no expression at all.

It localises to the membrane. This is Major facilitator superfamily domain-containing protein 6 (MFSD6) from Homo sapiens (Human).